A 246-amino-acid chain; its full sequence is 1-(5-phosphoribosyl)-5-[(5-phosphoribosylamino)methylideneamino] imidazole-4-carboxamide isomerase (246 aa).

Catalysis depends on Asp8, which acts as the Proton acceptor. Asp131 serves as the catalytic Proton donor.

It belongs to the HisA/HisF family.

The protein resides in the cytoplasm. The enzyme catalyses 1-(5-phospho-beta-D-ribosyl)-5-[(5-phospho-beta-D-ribosylamino)methylideneamino]imidazole-4-carboxamide = 5-[(5-phospho-1-deoxy-D-ribulos-1-ylimino)methylamino]-1-(5-phospho-beta-D-ribosyl)imidazole-4-carboxamide. It functions in the pathway amino-acid biosynthesis; L-histidine biosynthesis; L-histidine from 5-phospho-alpha-D-ribose 1-diphosphate: step 4/9. This Chromobacterium violaceum (strain ATCC 12472 / DSM 30191 / JCM 1249 / CCUG 213 / NBRC 12614 / NCIMB 9131 / NCTC 9757 / MK) protein is 1-(5-phosphoribosyl)-5-[(5-phosphoribosylamino)methylideneamino] imidazole-4-carboxamide isomerase.